The chain runs to 285 residues: Cytochrome c1 (285 aa).

The signal sequence occupies residues 1–22 (MIRKLTLTAATALALSGGAAMA). Heme c is bound by residues Cys-58, Cys-61, His-62, and Met-207. Residues 251–269 (AGFTAVMFLTVLSVLLYLT) traverse the membrane as a helical segment.

As to quaternary structure, the main subunits of complex b-c1 are: cytochrome b, cytochrome c1 and the Rieske protein. Post-translationally, binds 1 heme c group covalently per subunit.

The protein resides in the cell membrane. In terms of biological role, component of the ubiquinol-cytochrome c reductase complex (complex III or cytochrome b-c1 complex), which is a respiratory chain that generates an electrochemical potential coupled to ATP synthesis. c1 functions as an electron donor to cytochrome c. The chain is Cytochrome c1 (petC) from Cereibacter sphaeroides (Rhodobacter sphaeroides).